The chain runs to 151 residues: Small ribosomal subunit protein uS11A (151 aa).

The interval 131 to 151 (DVTPIPSDSTRRKGGRRGRRL) is disordered. Over residues 142–151 (RKGGRRGRRL) the composition is skewed to basic residues.

It belongs to the universal ribosomal protein uS11 family.

The chain is Small ribosomal subunit protein uS11A from Drosophila melanogaster (Fruit fly).